Consider the following 316-residue polypeptide: Transaldolase (316 aa).

The active-site Schiff-base intermediate with substrate is the K132.

This sequence belongs to the transaldolase family. Type 1 subfamily. In terms of assembly, homodimer.

The protein localises to the cytoplasm. The catalysed reaction is D-sedoheptulose 7-phosphate + D-glyceraldehyde 3-phosphate = D-erythrose 4-phosphate + beta-D-fructose 6-phosphate. It functions in the pathway carbohydrate degradation; pentose phosphate pathway; D-glyceraldehyde 3-phosphate and beta-D-fructose 6-phosphate from D-ribose 5-phosphate and D-xylulose 5-phosphate (non-oxidative stage): step 2/3. Functionally, transaldolase is important for the balance of metabolites in the pentose-phosphate pathway. The polypeptide is Transaldolase (Vibrio vulnificus (strain CMCP6)).